We begin with the raw amino-acid sequence, 73 residues long: Somatostatin-2 (73 aa).

A propeptide spanning residues 1 to 45 (SAGLLTQEWSAVEDLLAQMSLPEADAQRDAEMVSTATGGGRMNQE) is cleaved from the precursor. Positions 23 to 58 (EADAQRDAEMVSTATGGGRMNQESIEPPNNLPPRER) are disordered. Cysteine 62 and cysteine 73 are disulfide-bonded.

This sequence belongs to the somatostatin family.

The protein resides in the secreted. In terms of biological role, somatostatin inhibits the release of somatotropin. The polypeptide is Somatostatin-2 (sst2) (Platichthys flesus (European flounder)).